Reading from the N-terminus, the 402-residue chain is Rubredoxin-oxygen oxidoreductase (402 aa).

Residues 30–216 (PMGTTYNAYL…KAIETLVGAG (187 aa)) are zinc metallo-hydrolase. 6 residues coordinate Fe cation: histidine 79, glutamate 81, aspartate 83, histidine 146, aspartate 165, and histidine 226. The Flavodoxin-like domain maps to 255–393 (VVIFYDSMWH…QLKTMAQTIA (139 aa)).

This sequence in the N-terminal section; belongs to the zinc metallo-hydrolase group 3 family. In terms of assembly, homodimer. FMN is required as a cofactor. Fe cation serves as cofactor.

The protein operates within energy metabolism; electron transfer. Its function is as follows. Catalyzes the four-electron reduction of one oxygen molecule to two water molecules. The chain is Rubredoxin-oxygen oxidoreductase (roo) from Megalodesulfovibrio gigas (strain ATCC 19364 / DSM 1382 / NCIMB 9332 / VKM B-1759) (Desulfovibrio gigas).